The primary structure comprises 163 residues: SsrA-binding protein (163 aa).

The segment covering 138–157 has biased composition (basic and acidic residues); it reads EDRRGAIAERESKREMDRAL. The segment at 138-163 is disordered; it reads EDRRGAIAERESKREMDRALARGRRR.

It belongs to the SmpB family.

Its subcellular location is the cytoplasm. In terms of biological role, required for rescue of stalled ribosomes mediated by trans-translation. Binds to transfer-messenger RNA (tmRNA), required for stable association of tmRNA with ribosomes. tmRNA and SmpB together mimic tRNA shape, replacing the anticodon stem-loop with SmpB. tmRNA is encoded by the ssrA gene; the 2 termini fold to resemble tRNA(Ala) and it encodes a 'tag peptide', a short internal open reading frame. During trans-translation Ala-aminoacylated tmRNA acts like a tRNA, entering the A-site of stalled ribosomes, displacing the stalled mRNA. The ribosome then switches to translate the ORF on the tmRNA; the nascent peptide is terminated with the 'tag peptide' encoded by the tmRNA and targeted for degradation. The ribosome is freed to recommence translation, which seems to be the essential function of trans-translation. This chain is SsrA-binding protein, found in Anaeromyxobacter dehalogenans (strain 2CP-1 / ATCC BAA-258).